Reading from the N-terminus, the 834-residue chain is Glycerol-3-phosphate acyltransferase (834 aa).

Positions 309–314 match the HXXXXD motif motif; sequence CHRSHI.

The protein belongs to the GPAT/DAPAT family.

The protein localises to the cell inner membrane. It catalyses the reaction sn-glycerol 3-phosphate + an acyl-CoA = a 1-acyl-sn-glycero-3-phosphate + CoA. Its pathway is phospholipid metabolism; CDP-diacylglycerol biosynthesis; CDP-diacylglycerol from sn-glycerol 3-phosphate: step 1/3. The polypeptide is Glycerol-3-phosphate acyltransferase (Pseudomonas paraeruginosa (strain DSM 24068 / PA7) (Pseudomonas aeruginosa (strain PA7))).